We begin with the raw amino-acid sequence, 49 residues long: Small ribosomal subunit protein eS31 (49 aa).

The Zn(2+) site is built by cysteine 21, cysteine 24, cysteine 39, and cysteine 42. The C4-type zinc-finger motif lies at 21 to 42 (CPRCGNGVFLAEHEDRMSCGRC).

It belongs to the eukaryotic ribosomal protein eS31 family. As to quaternary structure, part of the 30S ribosomal subunit. The cofactor is Zn(2+).

The polypeptide is Small ribosomal subunit protein eS31 (Methanothrix thermoacetophila (strain DSM 6194 / JCM 14653 / NBRC 101360 / PT) (Methanosaeta thermophila)).